Consider the following 240-residue polypeptide: Ribonuclease PH (240 aa).

Phosphate contacts are provided by residues Arg-87 and 125–127 (GTR).

The protein belongs to the RNase PH family. As to quaternary structure, homohexameric ring arranged as a trimer of dimers.

The enzyme catalyses tRNA(n+1) + phosphate = tRNA(n) + a ribonucleoside 5'-diphosphate. Phosphorolytic 3'-5' exoribonuclease that plays an important role in tRNA 3'-end maturation. Removes nucleotide residues following the 3'-CCA terminus of tRNAs; can also add nucleotides to the ends of RNA molecules by using nucleoside diphosphates as substrates, but this may not be physiologically important. Probably plays a role in initiation of 16S rRNA degradation (leading to ribosome degradation) during starvation. In Pseudomonas putida (strain ATCC 47054 / DSM 6125 / CFBP 8728 / NCIMB 11950 / KT2440), this protein is Ribonuclease PH.